Consider the following 557-residue polypeptide: Putative inactive polypeptide N-acetylgalactosaminyltransferase 11 (557 aa).

At 1–4 the chain is on the cytoplasmic side; that stretch reads MKSL. Residues 5–27 traverse the membrane as a helical; Signal-anchor for type II membrane protein segment; that stretch reads LFGTPCSCAIFILVYCIITLFIW. Over 28 to 557 the chain is Lumenal; it reads FLYTDNLSNA…MRDICLSVNH (530 aa). 2 N-linked (GlcNAc...) asparagine glycosylation sites follow: N33 and N103. 5 cysteine pairs are disulfide-bonded: C99-C325, C316-C397, C437-C450, C472-C486, and C511-C526. The catalytic subdomain A stretch occupies residues 109–215; that stretch reads TVTVSIVIAI…RGWLPPLLEP (107 aa). N220 is a glycosylation site (N-linked (GlcNAc...) asparagine). A catalytic subdomain B region spans residues 271-333; it reads PYPSSQLEGR…PCSRVGIIYK (63 aa). N379 carries N-linked (GlcNAc...) asparagine glycosylation. The Ricin B-type lectin domain occupies 456–557; it reads EDWTLTSRCQ…MRDICLSVNH (102 aa).

The protein belongs to the glycosyltransferase 2 family. GalNAc-T subfamily.

The protein resides in the golgi apparatus membrane. Its function is as follows. Probable inactive glycosyltransferase. The chain is Putative inactive polypeptide N-acetylgalactosaminyltransferase 11 from Drosophila melanogaster (Fruit fly).